Here is a 248-residue protein sequence, read N- to C-terminus: 2,3-bisphosphoglycerate-dependent phosphoglycerate mutase (248 aa).

Residues 8–15 (RHGESEWN), 21–22 (TG), arginine 60, 87–90 (ERHY), lysine 98, 114–115 (RR), and 183–184 (GN) each bind substrate. Histidine 9 (tele-phosphohistidine intermediate) is an active-site residue. The active-site Proton donor/acceptor is glutamate 87.

Belongs to the phosphoglycerate mutase family. BPG-dependent PGAM subfamily.

The enzyme catalyses (2R)-2-phosphoglycerate = (2R)-3-phosphoglycerate. It functions in the pathway carbohydrate degradation; glycolysis; pyruvate from D-glyceraldehyde 3-phosphate: step 3/5. In terms of biological role, catalyzes the interconversion of 2-phosphoglycerate and 3-phosphoglycerate. This is 2,3-bisphosphoglycerate-dependent phosphoglycerate mutase from Coprothermobacter proteolyticus (strain ATCC 35245 / DSM 5265 / OCM 4 / BT).